Reading from the N-terminus, the 492-residue chain is MAQFCILGVLLILSGTHCSWGFHEETHYPCAFIDTANITGSYGLDGPFVHNWTVIPRHFVAVYDFVIENGIRIPASRHLRACVCKTKPCVRICCLRGEIYDLEKRQCLVPVAGVSSLPSHSHMEVELGNGSLRLVKLQPRFSIHVETPCEHMKAVTKGSEYVHWTLHENGTISHRGHIFSKHYCFTPLLHGNSTWEWQPLACAPEKLYFVLGVREWTYAICLLIAILSMFIVLMVYLMCSEMRNSFYGVAIKAYAICMILGYALLAYLTLHNPANLSNAACRILPSLALMNLVLSFYILSFIAFKLYLSFYGVVFTKLMFWLIFTPIVLVAVGWSFFVGFSYYGSRLIFGGDTCWFDPRNWSVMIYFYAPVFVACAISGFFYVLSQIYIRDQPDIETEKSFESIEKNRFKSFWKYFGYTAVVWVVCICSFAFNYYWENRSHLNYAVSFCMAFHGFAALYALIGKNQQIQNFLRRIDNGEDTCENSVPLSSFG.

The N-terminal stretch at 1 to 21 (MAQFCILGVLLILSGTHCSWG) is a signal peptide. Residues 22–218 (FHEETHYPCA…FVLGVREWTY (197 aa)) lie on the Extracellular side of the membrane. Cystine bridges form between cysteine 30-cysteine 82, cysteine 84-cysteine 89, cysteine 93-cysteine 184, and cysteine 94-cysteine 107. Asparagine 37 and asparagine 51 each carry an N-linked (GlcNAc...) asparagine glycan. N-linked (GlcNAc...) asparagine glycosylation is found at asparagine 129, asparagine 169, and asparagine 192. A helical transmembrane segment spans residues 219-239 (AICLLIAILSMFIVLMVYLMC). Residues 240–245 (SEMRNS) lie on the Cytoplasmic side of the membrane. A helical membrane pass occupies residues 246 to 266 (FYGVAIKAYAICMILGYALLA). At 267-282 (YLTLHNPANLSNAACR) the chain is on the extracellular side. An N-linked (GlcNAc...) asparagine glycan is attached at asparagine 275. A helical membrane pass occupies residues 283–303 (ILPSLALMNLVLSFYILSFIA). The Cytoplasmic segment spans residues 304–317 (FKLYLSFYGVVFTK). Residues 318–338 (LMFWLIFTPIVLVAVGWSFFV) traverse the membrane as a helical segment. Over 339–362 (GFSYYGSRLIFGGDTCWFDPRNWS) the chain is Extracellular. Asparagine 360 is a glycosylation site (N-linked (GlcNAc...) asparagine). Residues 363–383 (VMIYFYAPVFVACAISGFFYV) form a helical membrane-spanning segment. The Cytoplasmic portion of the chain corresponds to 384 to 411 (LSQIYIRDQPDIETEKSFESIEKNRFKS). Residues 412–432 (FWKYFGYTAVVWVVCICSFAF) traverse the membrane as a helical segment. Residues 433–441 (NYYWENRSH) are Extracellular-facing. N-linked (GlcNAc...) asparagine glycosylation is present at asparagine 438. Residues 442–462 (LNYAVSFCMAFHGFAALYALI) traverse the membrane as a helical segment. Over 463–492 (GKNQQIQNFLRRIDNGEDTCENSVPLSSFG) the chain is Cytoplasmic.

This sequence belongs to the G-protein coupled receptor 2 family. Mth subfamily.

It localises to the cell membrane. The chain is Probable G-protein coupled receptor Mth-like 8 (mthl8) from Drosophila melanogaster (Fruit fly).